A 497-amino-acid polypeptide reads, in one-letter code: Probable pyruvate kinase, cytosolic isozyme (497 aa).

Residue Arg-37 coordinates substrate. Asn-39, Ser-41, Asp-71, and Thr-72 together coordinate K(+). Residue 39–42 (NFSH) participates in ATP binding. Positions 78 and 163 each coordinate ATP. Lys-227 provides a ligand contact to substrate. Mg(2+) is bound at residue Glu-229. Positions 252, 253, and 285 each coordinate substrate. Position 253 (Asp-253) interacts with Mg(2+).

It belongs to the pyruvate kinase family. As to quaternary structure, homotetramer. Requires Mg(2+) as cofactor. K(+) is required as a cofactor.

It localises to the cytoplasm. It is found in the cytosol. It catalyses the reaction pyruvate + ATP = phosphoenolpyruvate + ADP + H(+). It functions in the pathway carbohydrate degradation; glycolysis; pyruvate from D-glyceraldehyde 3-phosphate: step 5/5. Its function is as follows. Key regulatory enzyme of the glycolytic pathway that catalyzes the final step of glycolysis, converting ADP and phosphoenolpyruvate (PEP) to ATP and pyruvate by essentially irreversible transphosphorylation. The protein is Probable pyruvate kinase, cytosolic isozyme of Arabidopsis thaliana (Mouse-ear cress).